Here is a 337-residue protein sequence, read N- to C-terminus: Glyceraldehyde-3-phosphate dehydrogenase 1 (337 aa).

Residues 12 to 13 (RI), aspartate 34, and methionine 79 each bind NAD(+). D-glyceraldehyde 3-phosphate is bound by residues 151 to 153 (SCT), threonine 182, 211 to 212 (TG), and arginine 234. Residue cysteine 152 is the Nucleophile of the active site. Asparagine 316 provides a ligand contact to NAD(+).

Belongs to the glyceraldehyde-3-phosphate dehydrogenase family. Homotetramer.

It is found in the cytoplasm. It carries out the reaction D-glyceraldehyde 3-phosphate + phosphate + NAD(+) = (2R)-3-phospho-glyceroyl phosphate + NADH + H(+). Its pathway is carbohydrate degradation; glycolysis; pyruvate from D-glyceraldehyde 3-phosphate: step 1/5. The protein is Glyceraldehyde-3-phosphate dehydrogenase 1 (GAP1) of Giardia intestinalis (Giardia lamblia).